A 291-amino-acid polypeptide reads, in one-letter code: uncharacterized protein (291 aa).

Residues 5–19 (AFIG…MAGH) and T97 contribute to the NAD(+) site. K172 is an active-site residue. K240 lines the NAD(+) pocket.

Belongs to the HIBADH-related family.

This is an uncharacterized protein from Shewanella frigidimarina (strain NCIMB 400).